The primary structure comprises 325 residues: Beta-ketoacyl-[acyl-carrier-protein] synthase III (325 aa).

Residues Cys119 and His252 contribute to the active site. Residues 253–257 (QANIR) are ACP-binding. Residue Asn282 is part of the active site.

This sequence belongs to the thiolase-like superfamily. FabH family. Homodimer.

The protein resides in the cytoplasm. It carries out the reaction malonyl-[ACP] + acetyl-CoA + H(+) = 3-oxobutanoyl-[ACP] + CO2 + CoA. Its pathway is lipid metabolism; fatty acid biosynthesis. In terms of biological role, catalyzes the condensation reaction of fatty acid synthesis by the addition to an acyl acceptor of two carbons from malonyl-ACP. Catalyzes the first condensation reaction which initiates fatty acid synthesis and may therefore play a role in governing the total rate of fatty acid production. Possesses both acetoacetyl-ACP synthase and acetyl transacylase activities. Its substrate specificity determines the biosynthesis of branched-chain and/or straight-chain of fatty acids. This is Beta-ketoacyl-[acyl-carrier-protein] synthase III from Polaromonas sp. (strain JS666 / ATCC BAA-500).